We begin with the raw amino-acid sequence, 740 residues long: DNA (cytosine-5)-methyltransferase 3C (740 aa).

Disordered stretches follow at residues 75–99 and 248–312; these read LTGD…PVMP and FKPT…DVTN. The ADD domain maps to 309–441; the sequence is DVTNNKGNLE…LQDFFTTDPD (133 aa). Residues 320-350 form a GATA-type; atypical zinc finger; the sequence is HCLSCGRKDPVSFHPLFEGGLCQSCRDRFLE. The PHD-type; atypical zinc-finger motif lies at 361 to 417; the sequence is QSYCTVCCEGRELLLCSNTSCCRCFCVECLEVLVGAGTAEDVKLQEPWSCYMCLPQR. The region spanning 462 to 740 is the SAM-dependent MTase C5-type domain; sequence IRVLSLFDGI…APLKDHFACE (279 aa). S-adenosyl-L-methionine contacts are provided by isoleucine 471, threonine 473, glutamate 492, aspartate 514, and isoleucine 515. Cysteine 538 is an active-site residue. Arginine 719 and tryptophan 721 together coordinate S-adenosyl-L-methionine.

It belongs to the class I-like SAM-binding methyltransferase superfamily. C5-methyltransferase family. As to quaternary structure, homodimer. Interacts with DNMT3L. Interacts with SPOCD1; recruiting Dnmt3C to transposons. Specifically expressed in testis.

The protein localises to the nucleus. It carries out the reaction a 2'-deoxycytidine in DNA + S-adenosyl-L-methionine = a 5-methyl-2'-deoxycytidine in DNA + S-adenosyl-L-homocysteine + H(+). In terms of biological role, DNA methyltransferase that specifically methylates the promoters of evolutionarily young retrotransposons in the male germline. De novo methylation and subsequent repression of transposable elements prevents their mobilization, which is essential for germline integrity. Compared to Dnmt3a and Dnmt3b, shows lower DNA methyltransferase efficiency. This is DNA (cytosine-5)-methyltransferase 3C from Mus musculus (Mouse).